The sequence spans 1008 residues: ATP-dependent DNA/RNA helicase DHX36 (1008 aa).

A required for recruitment to cytoplasmic stress granules region spans residues 1-51 (MSYDYHQNWGRDGGPRSSGGGYGGGPAGGHGGNRGSGGGGGGGGGGRGGRG). Positions 1-58 (MSYDYHQNWGRDGGPRSSGGGYGGGPAGGHGGNRGSGGGGGGGGGGRGGRGRHPGHLK) are disordered. Residues 1 to 104 (MSYDYHQNWG…IVQLLNSVQA (104 aa)) are required for the pre-miR-134 transport. A necessary for nuclear and nucleolar caps localizations region spans residues 1–200 (MSYDYHQNWG…KKNDLRYIEM (200 aa)). Residues 16-48 (RSSGGGYGGGPAGGHGGNRGSGGGGGGGGGGRG) show a composition bias toward gly residues. The tract at residues 53 to 75 (HPGHLKGREIGMWYAKKQGQKNK) is DSM (DHX36-specific motif). The tract at residues 53 to 105 (HPGHLKGREIGMWYAKKQGQKNKEAERQERAVVHMDERREEQIVQLLNSVQAK) is required for G4-DNA- and G4-RNA-binding. Positions 72 to 157 (QKNKEAERQE…INQEKKMFRI (86 aa)) form a coiled coil. RecA-like domain regions lie at residues 106 to 386 (NDKE…MIHI) and 387 to 628 (PGFT…DYQL). The residue at position 161 (Ser161) is a Phosphoserine. Residues 217 to 387 (VNLIDNHQVT…FGNCPMIHIP (171 aa)) enclose the Helicase ATP-binding domain. Position 233–238 (233–238 (GCGKTT)) interacts with ATP. Positions 265–317 (RRISAISVAERVAAERAESCGSGNSTGYQIRLQSRLPRKQGSILYCTTGIILQ) are necessary for interaction with single-stranded DNA at the 3'-end of the G4-DNA structure. The short motif at 334-337 (DEIH) is the DEAH box element. Residues Glu335 and His337 each contribute to the Mg(2+) site. The Helicase C-terminal domain maps to 477–647 (ALIRYIVLEE…ELCLQIKILR (171 aa)). A necessary for interaction with single-stranded DNA at the 3'-end of the G4-DNA structure region spans residues 498 to 557 (WDNISTLHDLLMSQVMFKSDKFLIIPLHSLMPTVNQTQVFKRTPPGVRKIVIATNIAETS). The Nuclear localization signal signature appears at 517-528 (DKFLIIPLHSLM). ATP is bound by residues Ser557 and 602–605 (RAGR). Residues 629–698 (PEILRTPLEE…LGVHLARLPV (70 aa)) are WH domain. Necessary for interaction with single-stranded DNA at the 3'-end of the G4-DNA structure stretches follow at residues 638–697 (ELCL…ARLP), 849–860 (NLGKKRKMVKVY), and 870–900 (HPKS…IYLY). The segment at 841 to 905 (PKVAKIRLNL…SIYLYDCTEV (65 aa)) is OB-fold-like subdomains. Lys947 bears the N6-acetyllysine mark. Ser963 bears the Phosphoserine mark.

It belongs to the DEAD box helicase family. DEAH subfamily. Found in a multi-helicase-TICAM1 complex at least composed of DHX36, DDX1, DDX21 and TICAM1; this complex exists in resting cells with or without dsRNA poly(I:C) ligand stimulation. Interacts (via C-terminus) with TICAM1 (via TIR domain). Interacts (via C-terminus) with DDX21; this interaction serves as bridges to TICAM1. Interacts with TERT; this interaction is dependent on the ability of DHX36 to bind to the G-quadruplex RNA (G4-RNA) structure present in the telomerase RNA template component (TERC). Interacts with DKC1; this interaction is dependent on the ability of DHX36 to bind to the G4-RNA structure present in TERC. Interacts with PARN; this interaction stimulates PARN to enhance uPA mRNA decay. Interacts with EXOSC3; this interaction occurs in a RNase-insensitive manner. Interacts with EXOSC10; this interaction occurs in a RNase-insensitive manner. Interacts with ILF3; this interaction occurs in a RNA-dependent manner. Interacts with ELAVL1; this interaction occurs in an RNA-dependent manner. Interacts with DDX5; this interaction occurs in a RNA-dependent manner. Interacts with DDX17; this interaction occurs in a RNA-dependent manner. Interacts with HDAC1; this interaction occurs in a RNA-dependent manner. Interacts with HDAC3; this interaction occurs in a RNA-dependent manner. Interacts with HDAC4. Interacts with AGO1. Interacts with AGO2. Interacts with ERCC6. Mg(2+) serves as cofactor. In terms of tissue distribution, highly expressed in testis.

It localises to the nucleus. Its subcellular location is the cytoplasm. The protein resides in the cytosol. It is found in the stress granule. The protein localises to the nucleus speckle. It localises to the chromosome. Its subcellular location is the telomere. The protein resides in the mitochondrion. It is found in the perikaryon. The protein localises to the cell projection. It localises to the dendrite. Its subcellular location is the axon. The catalysed reaction is ATP + H2O = ADP + phosphate + H(+). With respect to regulation, ATPase activity is enhanced in the presence of homomeric poly(U) RNAs, but not by double-stranded DNA (dsDNA), double-stranded RNA (dsRNA) and tRNA. Functionally, multifunctional ATP-dependent helicase that unwinds G-quadruplex (G4) structures. Plays a role in many biological processes such as genomic integrity, gene expression regulations and as a sensor to initiate antiviral responses. G4 structures correspond to helical structures containing guanine tetrads. Binds with high affinity to and unwinds G4 structures that are formed in nucleic acids (G4-DNA and G4-RNA). Plays a role in genomic integrity. Converts the G4-RNA structure present in telomerase RNA template component (TREC) into a double-stranded RNA to promote P1 helix formation that acts as a template boundary ensuring accurate reverse transcription. Plays a role in transcriptional regulation. Resolves G4-DNA structures in promoters of genes, such as YY1, KIT/c-kit and ALPL and positively regulates their expression. Plays a role in post-transcriptional regulation. Unwinds a G4-RNA structure located in the 3'-UTR polyadenylation site of the pre-mRNA TP53 and stimulates TP53 pre-mRNA 3'-end processing in response to ultraviolet (UV)-induced DNA damage. Binds to the precursor-microRNA-134 (pre-miR-134) terminal loop and regulates its transport into the synapto-dendritic compartment. Involved in the pre-miR-134-dependent inhibition of target gene expression and the control of dendritic spine size. Plays a role in the regulation of cytoplasmic mRNA translation and mRNA stability. Binds to both G4-RNA structures and alternative non-quadruplex-forming sequence within the 3'-UTR of the PITX1 mRNA regulating negatively PITX1 protein expression. Binds to both G4-RNA structure in the 5'-UTR and AU-rich elements (AREs) localized in the 3'-UTR of NKX2-5 mRNA to either stimulate protein translation or induce mRNA decay in an ELAVL1-dependent manner, respectively. Also binds to ARE sequences present in several mRNAs mediating exosome-mediated 3'-5' mRNA degradation. Involved in cytoplasmic urokinase-type plasminogen activator (uPA) mRNA decay. Component of a multi-helicase-TICAM1 complex that acts as a cytoplasmic sensor of viral double-stranded RNA (dsRNA) and plays a role in the activation of a cascade of antiviral responses including the induction of pro-inflammatory cytokines via the adapter molecule TICAM1. Required for early embryonic development and hematopoiesis. Involved in the regulation of cardioblast differentiation and proliferation during heart development. Involved in spermatogonia differentiation. May play a role in ossification. The sequence is that of ATP-dependent DNA/RNA helicase DHX36 from Homo sapiens (Human).